The sequence spans 252 residues: Proteasome subunit alpha type-3 (252 aa).

The protein belongs to the peptidase T1A family. The 26S proteasome consists of a 20S proteasome core and two 19S regulatory subunits. The 20S proteasome core is composed of 28 subunits that are arranged in four stacked rings, resulting in a barrel-shaped structure. The two end rings are each formed by seven alpha subunits, and the two central rings are each formed by seven beta subunits. The catalytic chamber with the active sites is on the inside of the barrel.

Its subcellular location is the cytoplasm. The protein localises to the nucleus. The proteasome is a multicatalytic proteinase complex which is characterized by its ability to cleave peptides with Arg, Phe, Tyr, Leu, and Glu adjacent to the leaving group at neutral or slightly basic pH. The proteasome has an ATP-dependent proteolytic activity. The polypeptide is Proteasome subunit alpha type-3 (Acanthamoeba castellanii (Amoeba)).